The following is a 276-amino-acid chain: Nickel import system permease protein NikC (276 aa).

5 helical membrane passes run 10–30 (LIFF…FFVS), 73–93 (LFVT…LGLF), 108–128 (FIDV…ASFF), 186–206 (IIPA…LYIS), and 238–258 (IMLI…NLTG). The ABC transmembrane type-1 domain occupies 69–258 (ARSTLFVTVL…ITILIFNLTG (190 aa)).

It belongs to the binding-protein-dependent transport system permease family. OppBC subfamily. In terms of assembly, the complex is composed of two ATP-binding proteins (NikD and NikE), two transmembrane proteins (NikB and NikC) and a solute-binding protein (NikA).

It localises to the cell membrane. In terms of biological role, part of the ABC transporter complex NikABCDE (Opp2) involved in nickel import. Probably responsible for the translocation of the substrate across the membrane. The sequence is that of Nickel import system permease protein NikC from Staphylococcus aureus (strain USA300).